We begin with the raw amino-acid sequence, 2215 residues long: Unconventional myosin-VIIa (2215 aa).

In terms of domain architecture, Myosin motor spans His65–Asp741. Gly158–Thr165 is an ATP binding site. The segment at Phe632 to Asn639 is actin-binding. 5 consecutive IQ domains span residues Thr745 to Leu765, Lys768 to Gly788, Arg791 to Arg811, Arg814 to Arg834, and Leu837 to Gln857. The tract at residues Arg858–Glu935 is SAH. The MyTH4 1 domain maps to Tyr1017 to Lys1253. An FERM 1 domain is found at Ile1258–Arg1602. Ser1569 carries the post-translational modification Phosphoserine. The residue at position 1571 (Thr1571) is a Phosphothreonine. In terms of domain architecture, SH3 spans Lys1603–Thr1672. Residues His1747–Gln1896 enclose the MyTH4 2 domain. The region spanning Ile1902–Met2205 is the FERM 2 domain.

It belongs to the TRAFAC class myosin-kinesin ATPase superfamily. Myosin family. In terms of assembly, might homodimerize in a two headed molecule through the formation of a coiled-coil rod. Identified in a complex with USH1C and USH1G. Interacts with MYRIP. Interacts with RPE65. Interacts with CIB2. May interact with CALM. Interacts with WHRN. Interacts with PLEKHB1 (via PH domain). Interacts with PCDH15. Interacts with TWF2. Interacts with USH1G. Interacts with MYH9. Interacts (via MyTH4-FERM domains) with cytoplasmic regions of ADGRV1 and USH2A. Interacts with PDZD7 (via MyTH4-FERM domains). Interacts with CALML4. As to expression, expressed in the pigment epithelium and the photoreceptor cells of the retina. Also found in kidney, liver, testis, cochlea, lymphocytes. Not expressed in brain.

The protein localises to the cytoplasm. The protein resides in the cell cortex. It localises to the cytoskeleton. Its subcellular location is the synapse. Its activity is regulated as follows. ATP hydrolysis is inhibited by Mg(2+), already at a concentration of 0.4 mM. Myosins are actin-based motor molecules with ATPase activity. Unconventional myosins serve in intracellular movements. Their highly divergent tails bind to membranous compartments, which are then moved relative to actin filaments. In the retina, plays an important role in the renewal of the outer photoreceptor disks. Plays an important role in the distribution and migration of retinal pigment epithelial (RPE) melanosomes and phagosomes, and in the regulation of opsin transport in retinal photoreceptors. In the inner ear, plays an important role in differentiation, morphogenesis and organization of cochlear hair cell bundles. Involved in hair-cell vesicle trafficking of aminoglycosides, which are known to induce ototoxicity. Motor protein that is a part of the functional network formed by USH1C, USH1G, CDH23 and MYO7A that mediates mechanotransduction in cochlear hair cells. Required for normal hearing. This chain is Unconventional myosin-VIIa, found in Homo sapiens (Human).